Here is a 116-residue protein sequence, read N- to C-terminus: MEEYHRHCDEVGFNADEAHNIVKECIDGVLGGEDYNQNNINQWTASIVEQSLTHLVKLGKAYKYIVTCAVVQRSAYGFHTASSCFWDTTSDGTCTVRWENRTMNCIVNVFAIAIVL.

3'-nitrotyrosine is present on Tyr-4.

The protein belongs to the dynein light chain Tctex-type family. In terms of assembly, homodimer. The cytoplasmic dynein 1 complex consists of two catalytic heavy chains (HCs) and a number of non-catalytic subunits presented by intermediate chains (ICs), light intermediate chains (LICs) and light chains (LCs); the composition seems to vary in respect to the IC, LIC and LC composition. The heavy chain homodimer serves as a scaffold for the probable homodimeric assembly of the respective non-catalytic subunits. The ICs and LICs bind directly to the HC dimer and the LCs assemble on the IC dimer. DYNLT1 and DYNLT3 compete for association with dynein IC (DYNC1I1 or DYNC1I2). Self-associates. Interacts with DYNC1I1 and DYNC1I2. Interacts with BUB3. Interacts with SATB1 in nucleus to form complex with matrix attachment regions (MARs) of DNA.

It is found in the nucleus. It localises to the cytoplasm. The protein resides in the cytoskeleton. Its subcellular location is the chromosome. The protein localises to the centromere. It is found in the kinetochore. Acts as one of several non-catalytic accessory components of the cytoplasmic dynein 1 complex that are thought to be involved in linking dynein to cargos and to adapter proteins that regulate dynein function. Cytoplasmic dynein 1 acts as a motor for the intracellular retrograde motility of vesicles and organelles along microtubules. Probably binds BUB3 as part of transport cargo. Required for the efficient progression through mitosis. The polypeptide is Dynein light chain Tctex-type 3 (DYNLT3) (Canis lupus familiaris (Dog)).